We begin with the raw amino-acid sequence, 483 residues long: Putative (R)-citramalate synthase CimA (483 aa).

Positions M1–Y245 constitute a Pyruvate carboxyltransferase domain.

It belongs to the alpha-IPM synthase/homocitrate synthase family. As to quaternary structure, homodimer.

It catalyses the reaction pyruvate + acetyl-CoA + H2O = (3R)-citramalate + CoA + H(+). The protein operates within amino-acid biosynthesis; L-isoleucine biosynthesis; 2-oxobutanoate from pyruvate: step 1/3. Functionally, catalyzes the condensation of pyruvate and acetyl-coenzyme A to form (R)-citramalate. The protein is Putative (R)-citramalate synthase CimA of Methanosarcina mazei (strain ATCC BAA-159 / DSM 3647 / Goe1 / Go1 / JCM 11833 / OCM 88) (Methanosarcina frisia).